We begin with the raw amino-acid sequence, 587 residues long: 2-succinyl-5-enolpyruvyl-6-hydroxy-3-cyclohexene-1-carboxylate synthase (587 aa).

Belongs to the TPP enzyme family. MenD subfamily. In terms of assembly, homodimer. Mg(2+) is required as a cofactor. The cofactor is Mn(2+). Thiamine diphosphate serves as cofactor.

The enzyme catalyses isochorismate + 2-oxoglutarate + H(+) = 5-enolpyruvoyl-6-hydroxy-2-succinyl-cyclohex-3-ene-1-carboxylate + CO2. Its pathway is quinol/quinone metabolism; 1,4-dihydroxy-2-naphthoate biosynthesis; 1,4-dihydroxy-2-naphthoate from chorismate: step 2/7. The protein operates within cofactor biosynthesis; phylloquinone biosynthesis. In terms of biological role, catalyzes the thiamine diphosphate-dependent decarboxylation of 2-oxoglutarate and the subsequent addition of the resulting succinic semialdehyde-thiamine pyrophosphate anion to isochorismate to yield 2-succinyl-5-enolpyruvyl-6-hydroxy-3-cyclohexene-1-carboxylate (SEPHCHC). The polypeptide is 2-succinyl-5-enolpyruvyl-6-hydroxy-3-cyclohexene-1-carboxylate synthase (Prochlorococcus marinus (strain MIT 9215)).